Here is a 176-residue protein sequence, read N- to C-terminus: Small ribosomal subunit protein uS5c (176 aa).

The S5 DRBM domain maps to L26–L89.

This sequence belongs to the universal ribosomal protein uS5 family. As to quaternary structure, part of the 30S ribosomal subunit. Contacts protein S4.

Its subcellular location is the plastid. The protein localises to the chloroplast. Its function is as follows. With S4 and S12 plays an important role in translational accuracy. The sequence is that of Small ribosomal subunit protein uS5c (rps5) from Phaeodactylum tricornutum (strain CCAP 1055/1).